Here is a 92-residue protein sequence, read N- to C-terminus: Acyl carrier protein AcpXL (92 aa).

The Carrier domain occupies Thr2–Lys88. Ser37 carries the O-(pantetheine 4'-phosphoryl)serine modification.

In terms of processing, 4'-phosphopantetheine is transferred from CoA to a specific serine of apo-ACP by AcpS. This modification is essential for activity because fatty acids are bound in thioester linkage to the sulfhydryl of the prosthetic group.

The protein resides in the cytoplasm. The protein operates within glycolipid biosynthesis; KDO(2)-lipid A biosynthesis. Functionally, carrier of the growing fatty acid chain in fatty acid biosynthesis. Is involved in the transfer of long hydroxylated fatty acids to lipid A. Is acylated predominantly with 27-hydroxyoctacosanoic acid. In Rhizobium etli (strain ATCC 51251 / DSM 11541 / JCM 21823 / NBRC 15573 / CFN 42), this protein is Acyl carrier protein AcpXL (acpXL).